The primary structure comprises 466 residues: Ribulose bisphosphate carboxylase large chain (466 aa).

N6,N6,N6-trimethyllysine is present on lysine 4. Asparagine 113 and threonine 163 together coordinate substrate. Lysine 165 acts as the Proton acceptor in catalysis. Lysine 167 provides a ligand contact to substrate. 3 residues coordinate Mg(2+): lysine 191, aspartate 193, and glutamate 194. Lysine 191 is modified (N6-carboxylysine). Residue histidine 284 is the Proton acceptor of the active site. Substrate is bound by residues arginine 285, histidine 317, and serine 369.

It belongs to the RuBisCO large chain family. Type I subfamily. Heterohexadecamer of 8 large chains and 8 small chains; disulfide-linked. The disulfide link is formed within the large subunit homodimers. Requires Mg(2+) as cofactor. The disulfide bond which can form in the large chain dimeric partners within the hexadecamer appears to be associated with oxidative stress and protein turnover.

The protein resides in the plastid. It localises to the chloroplast. It carries out the reaction 2 (2R)-3-phosphoglycerate + 2 H(+) = D-ribulose 1,5-bisphosphate + CO2 + H2O. The catalysed reaction is D-ribulose 1,5-bisphosphate + O2 = 2-phosphoglycolate + (2R)-3-phosphoglycerate + 2 H(+). In terms of biological role, ruBisCO catalyzes two reactions: the carboxylation of D-ribulose 1,5-bisphosphate, the primary event in carbon dioxide fixation, as well as the oxidative fragmentation of the pentose substrate in the photorespiration process. Both reactions occur simultaneously and in competition at the same active site. This Pinguicula caerulea (Blueflower butterwort) protein is Ribulose bisphosphate carboxylase large chain.